A 561-amino-acid polypeptide reads, in one-letter code: Dihydroxy-acid dehydratase (561 aa).

Residue C50 coordinates [2Fe-2S] cluster. D82 contributes to the Mg(2+) binding site. C123 contacts [2Fe-2S] cluster. Positions 124 and 125 each coordinate Mg(2+). Position 125 is an N6-carboxylysine (K125). Residue C195 coordinates [2Fe-2S] cluster. E447 contacts Mg(2+). Residue S473 is the Proton acceptor of the active site.

Belongs to the IlvD/Edd family. In terms of assembly, homodimer. It depends on [2Fe-2S] cluster as a cofactor. Mg(2+) is required as a cofactor.

The catalysed reaction is (2R)-2,3-dihydroxy-3-methylbutanoate = 3-methyl-2-oxobutanoate + H2O. It carries out the reaction (2R,3R)-2,3-dihydroxy-3-methylpentanoate = (S)-3-methyl-2-oxopentanoate + H2O. It functions in the pathway amino-acid biosynthesis; L-isoleucine biosynthesis; L-isoleucine from 2-oxobutanoate: step 3/4. Its pathway is amino-acid biosynthesis; L-valine biosynthesis; L-valine from pyruvate: step 3/4. Functionally, functions in the biosynthesis of branched-chain amino acids. Catalyzes the dehydration of (2R,3R)-2,3-dihydroxy-3-methylpentanoate (2,3-dihydroxy-3-methylvalerate) into 2-oxo-3-methylpentanoate (2-oxo-3-methylvalerate) and of (2R)-2,3-dihydroxy-3-methylbutanoate (2,3-dihydroxyisovalerate) into 2-oxo-3-methylbutanoate (2-oxoisovalerate), the penultimate precursor to L-isoleucine and L-valine, respectively. In Microcystis aeruginosa (strain NIES-843 / IAM M-2473), this protein is Dihydroxy-acid dehydratase.